Consider the following 183-residue polypeptide: Ribosome rescue factor SmrB (183 aa).

The Smr domain maps to 98–173; that stretch reads LDLHGLTQLQ…GDAALLVLIE (76 aa).

Belongs to the SmrB family. Associates with collided ribosomes, but not with correctly translating polysomes.

Functionally, acts as a ribosome collision sensor. Detects stalled/collided disomes (pairs of ribosomes where the leading ribosome is stalled and a second ribosome has collided with it) and endonucleolytically cleaves mRNA at the 5' boundary of the stalled ribosome. Stalled/collided disomes form a new interface (primarily via the 30S subunits) that binds SmrB. Cleaved mRNA becomes available for tmRNA ligation, leading to ribosomal subunit dissociation and rescue of stalled ribosomes. This Escherichia coli O157:H7 protein is Ribosome rescue factor SmrB.